A 285-amino-acid polypeptide reads, in one-letter code: HTH-type transcriptional regulator MurR (285 aa).

The region spanning 1 to 77 (MLYLTKIRNA…MALIGEYSAS (77 aa)) is the HTH rpiR-type domain. The segment at residues 37 to 56 (SRKMAKQLGISQSSIVKFAQ) is a DNA-binding region (H-T-H motif). One can recognise an SIS domain in the interval 128-268 (IIEVISKAPF…FVGLVQLNDV (141 aa)).

As to quaternary structure, homotetramer.

It functions in the pathway amino-sugar metabolism; N-acetylmuramate degradation [regulation]. In terms of biological role, represses the expression of the murPQ operon involved in the uptake and degradation of N-acetylmuramic acid (MurNAc). Binds to two adjacent inverted repeats within the operator region. MurNAc 6-phosphate, the substrate of MurQ, is the specific inducer that weakens binding of MurR to the operator. In Escherichia coli O9:H4 (strain HS), this protein is HTH-type transcriptional regulator MurR.